A 93-amino-acid chain; its full sequence is MKQSLAVKTFEDLFAELSERARTRPTDSATVASLDGGIHALGKKILEEAGEVWLAAEHEPKEVLAEEISQLLYWTQVLMISRGLSLDDVYRKL.

The protein belongs to the PRA-PH family.

The protein resides in the cytoplasm. It carries out the reaction 1-(5-phospho-beta-D-ribosyl)-ATP + H2O = 1-(5-phospho-beta-D-ribosyl)-5'-AMP + diphosphate + H(+). The protein operates within amino-acid biosynthesis; L-histidine biosynthesis; L-histidine from 5-phospho-alpha-D-ribose 1-diphosphate: step 2/9. The polypeptide is Phosphoribosyl-ATP pyrophosphatase (Mycobacterium leprae (strain Br4923)).